The sequence spans 619 residues: Dihydroxy-acid dehydratase (619 aa).

Asp-81 is a binding site for Mg(2+). [2Fe-2S] cluster is bound at residue Cys-122. Residues Asp-123 and Lys-124 each contribute to the Mg(2+) site. Residue Lys-124 is modified to N6-carboxylysine. A [2Fe-2S] cluster-binding site is contributed by Cys-195. Glu-491 provides a ligand contact to Mg(2+). Ser-517 (proton acceptor) is an active-site residue.

Belongs to the IlvD/Edd family. As to quaternary structure, homodimer. It depends on [2Fe-2S] cluster as a cofactor. Requires Mg(2+) as cofactor.

The catalysed reaction is (2R)-2,3-dihydroxy-3-methylbutanoate = 3-methyl-2-oxobutanoate + H2O. It catalyses the reaction (2R,3R)-2,3-dihydroxy-3-methylpentanoate = (S)-3-methyl-2-oxopentanoate + H2O. It functions in the pathway amino-acid biosynthesis; L-isoleucine biosynthesis; L-isoleucine from 2-oxobutanoate: step 3/4. Its pathway is amino-acid biosynthesis; L-valine biosynthesis; L-valine from pyruvate: step 3/4. Functions in the biosynthesis of branched-chain amino acids. Catalyzes the dehydration of (2R,3R)-2,3-dihydroxy-3-methylpentanoate (2,3-dihydroxy-3-methylvalerate) into 2-oxo-3-methylpentanoate (2-oxo-3-methylvalerate) and of (2R)-2,3-dihydroxy-3-methylbutanoate (2,3-dihydroxyisovalerate) into 2-oxo-3-methylbutanoate (2-oxoisovalerate), the penultimate precursor to L-isoleucine and L-valine, respectively. This chain is Dihydroxy-acid dehydratase, found in Rhodopseudomonas palustris (strain HaA2).